The following is a 156-amino-acid chain: Small ribosomal subunit protein uS7 (156 aa).

It belongs to the universal ribosomal protein uS7 family. Part of the 30S ribosomal subunit. Contacts proteins S9 and S11.

Functionally, one of the primary rRNA binding proteins, it binds directly to 16S rRNA where it nucleates assembly of the head domain of the 30S subunit. Is located at the subunit interface close to the decoding center, probably blocks exit of the E-site tRNA. The polypeptide is Small ribosomal subunit protein uS7 (Pseudarthrobacter chlorophenolicus (strain ATCC 700700 / DSM 12829 / CIP 107037 / JCM 12360 / KCTC 9906 / NCIMB 13794 / A6) (Arthrobacter chlorophenolicus)).